The sequence spans 381 residues: 4-hydroxyphenylpyruvate dioxygenase (381 aa).

2 VOC domains span residues 22–156 (GMDA…LVER) and 184–338 (AVDH…IFTK). Fe cation-binding residues include His-187, His-270, and Glu-349.

It belongs to the 4HPPD family. In terms of assembly, homodimer. Fe cation is required as a cofactor.

It carries out the reaction 3-(4-hydroxyphenyl)pyruvate + O2 = homogentisate + CO2. Its pathway is amino-acid degradation; L-phenylalanine degradation; acetoacetate and fumarate from L-phenylalanine: step 3/6. The chain is 4-hydroxyphenylpyruvate dioxygenase (hpd) from Streptomyces coelicolor (strain ATCC BAA-471 / A3(2) / M145).